The chain runs to 432 residues: Adenylosuccinate synthetase (432 aa).

GTP-binding positions include 12–18 and 40–42; these read GDEGKGK and GHT. Asp13 acts as the Proton acceptor in catalysis. Mg(2+) is bound by residues Asp13 and Gly40. Residues 13 to 16, 38 to 41, Thr132, Arg146, Gln226, Thr241, and Arg305 each bind IMP; these read DEGK and NAGH. His41 (proton donor) is an active-site residue. Residue 301-307 coordinates substrate; it reads TVTGRKR. Residues Arg307, 333 to 335, and 415 to 417 contribute to the GTP site; these read KLD and STS.

It belongs to the adenylosuccinate synthetase family. As to quaternary structure, homodimer. Mg(2+) serves as cofactor.

Its subcellular location is the cytoplasm. The enzyme catalyses IMP + L-aspartate + GTP = N(6)-(1,2-dicarboxyethyl)-AMP + GDP + phosphate + 2 H(+). Its pathway is purine metabolism; AMP biosynthesis via de novo pathway; AMP from IMP: step 1/2. Functionally, plays an important role in the de novo pathway of purine nucleotide biosynthesis. Catalyzes the first committed step in the biosynthesis of AMP from IMP. This is Adenylosuccinate synthetase from Chelativorans sp. (strain BNC1).